The following is a 206-amino-acid chain: Orotate phosphoribosyltransferase (206 aa).

Residues Arg97, Lys98, Lys101, and 125 to 133 (NDVIASGRS) contribute to the 5-phospho-alpha-D-ribose 1-diphosphate site. Arg157 is an orotate binding site.

The protein belongs to the purine/pyrimidine phosphoribosyltransferase family. PyrE subfamily. Homodimer. Requires Mg(2+) as cofactor.

The catalysed reaction is orotidine 5'-phosphate + diphosphate = orotate + 5-phospho-alpha-D-ribose 1-diphosphate. The protein operates within pyrimidine metabolism; UMP biosynthesis via de novo pathway; UMP from orotate: step 1/2. In terms of biological role, catalyzes the transfer of a ribosyl phosphate group from 5-phosphoribose 1-diphosphate to orotate, leading to the formation of orotidine monophosphate (OMP). This is Orotate phosphoribosyltransferase from Chlamydia felis (strain Fe/C-56) (Chlamydophila felis).